A 158-amino-acid chain; its full sequence is Transcription elongation factor GreA (158 aa).

It belongs to the GreA/GreB family.

Necessary for efficient RNA polymerase transcription elongation past template-encoded arresting sites. The arresting sites in DNA have the property of trapping a certain fraction of elongating RNA polymerases that pass through, resulting in locked ternary complexes. Cleavage of the nascent transcript by cleavage factors such as GreA or GreB allows the resumption of elongation from the new 3'terminus. GreA releases sequences of 2 to 3 nucleotides. The protein is Transcription elongation factor GreA of Pseudomonas syringae pv. tomato (strain ATCC BAA-871 / DC3000).